The chain runs to 175 residues: B9 domain-containing protein 2 (175 aa).

One can recognise a C2 B9-type domain in the interval Ala2–Ser118.

It belongs to the B9D family. As to quaternary structure, part of the tectonic-like complex (also named B9 complex).

The protein resides in the cytoplasm. It is found in the cytoskeleton. The protein localises to the cilium basal body. Its subcellular location is the cilium axoneme. Its function is as follows. Component of the tectonic-like complex, a complex localized at the transition zone of primary cilia and acting as a barrier that prevents diffusion of transmembrane proteins between the cilia and plasma membranes. This chain is B9 domain-containing protein 2 (b9d2), found in Danio rerio (Zebrafish).